Consider the following 551-residue polypeptide: Serine beta-lactamase-like protein LACTB, mitochondrial (551 aa).

The N-terminal 113 residues, 1–113 (MYRLLSSVTA…RAIESSRDLL (113 aa)), are a transit peptide targeting the mitochondrion. Residues 69–101 (PADPEASGTTELSHEQALSPGSPHTPAPPAARG) are disordered. S162 serves as the catalytic Acyl-ester intermediate. Residues 237-287 (LKMVKGTPPPSDQEKELKEKGGKNNEKSDAPKAKVEQDSEARCRSAKPGKK) are disordered. Residues 248–279 (DQEKELKEKGGKNNEKSDAPKAKVEQDSEARC) show a composition bias toward basic and acidic residues. K287 and K288 each carry N6-succinyllysine. N6-acetyllysine occurs at positions 301 and 346.

Belongs to the peptidase S12 family. In terms of tissue distribution, expressed predominantly in liver.

The protein resides in the mitochondrion. Functionally, mitochondrial serine protease that acts as a regulator of mitochondrial lipid metabolism. Acts by decreasing protein levels of PISD, a mitochondrial enzyme that converts phosphatidylserine (PtdSer) to phosphatidylethanolamine (PtdEtn), thereby affecting mitochondrial lipid metabolism. It is unclear whether it acts directly by mediating proteolysis of PISD or by mediating proteolysis of another lipid metabolism protein. Acts as a tumor suppressor that has the ability to inhibit proliferation of multiple types of cancer cells: probably by promoting decreased levels of PISD, thereby affecting mitochondrial lipid metabolism. The sequence is that of Serine beta-lactamase-like protein LACTB, mitochondrial from Mus musculus (Mouse).